The chain runs to 156 residues: Ribosomal RNA large subunit methyltransferase H (156 aa).

S-adenosyl-L-methionine is bound by residues Leu-73, Gly-104, and 123-128 (LSSLTL).

The protein belongs to the RNA methyltransferase RlmH family. Homodimer.

The protein localises to the cytoplasm. It carries out the reaction pseudouridine(1915) in 23S rRNA + S-adenosyl-L-methionine = N(3)-methylpseudouridine(1915) in 23S rRNA + S-adenosyl-L-homocysteine + H(+). Specifically methylates the pseudouridine at position 1915 (m3Psi1915) in 23S rRNA. The chain is Ribosomal RNA large subunit methyltransferase H from Neisseria meningitidis serogroup C (strain 053442).